Here is a 156-residue protein sequence, read N- to C-terminus: Hemerythrin-like protein (156 aa).

Residues H54, H84, E88, H109, H113, H142, and D147 each contribute to the Fe cation site.

Belongs to the hemerythrin family.

Oxygen-binding protein. The oxygen-binding site contains two iron atoms. This Nematostella vectensis (Starlet sea anemone) protein is Hemerythrin-like protein.